An 82-amino-acid polypeptide reads, in one-letter code: MAGKSEFNIFKHVLVPEHRILSEEEKKALLEKYRITPAQLPQIKASDPAVKALGAKPGDIIEIKRKSPTAGVYYYYRVVVED.

Belongs to the archaeal Rpo5/eukaryotic RPB5 RNA polymerase subunit family. As to quaternary structure, part of the RNA polymerase complex.

It localises to the cytoplasm. The enzyme catalyses RNA(n) + a ribonucleoside 5'-triphosphate = RNA(n+1) + diphosphate. DNA-dependent RNA polymerase (RNAP) catalyzes the transcription of DNA into RNA using the four ribonucleoside triphosphates as substrates. In Pyrococcus abyssi (strain GE5 / Orsay), this protein is DNA-directed RNA polymerase subunit Rpo5.